The primary structure comprises 101 residues: Urease subunit beta (101 aa).

It belongs to the urease beta subunit family. Heterotrimer of UreA (gamma), UreB (beta) and UreC (alpha) subunits. Three heterotrimers associate to form the active enzyme.

It is found in the cytoplasm. It carries out the reaction urea + 2 H2O + H(+) = hydrogencarbonate + 2 NH4(+). Its pathway is nitrogen metabolism; urea degradation; CO(2) and NH(3) from urea (urease route): step 1/1. In Agrobacterium fabrum (strain C58 / ATCC 33970) (Agrobacterium tumefaciens (strain C58)), this protein is Urease subunit beta.